A 469-amino-acid polypeptide reads, in one-letter code: Adenosylhomocysteinase (469 aa).

Substrate contacts are provided by Thr63, Asp139, and Glu164. 165–167 (TTT) is a binding site for NAD(+). Substrate is bound by residues Lys194 and Asp198. Residues Asn199, 228 to 233 (GYGDVG), Glu251, Asn300, 321 to 323 (IGH), and Asn375 contribute to the NAD(+) site.

It belongs to the adenosylhomocysteinase family. NAD(+) is required as a cofactor.

The protein resides in the cytoplasm. The enzyme catalyses S-adenosyl-L-homocysteine + H2O = L-homocysteine + adenosine. The protein operates within amino-acid biosynthesis; L-homocysteine biosynthesis; L-homocysteine from S-adenosyl-L-homocysteine: step 1/1. In terms of biological role, may play a key role in the regulation of the intracellular concentration of adenosylhomocysteine. This Pseudomonas fluorescens (strain SBW25) protein is Adenosylhomocysteinase.